Consider the following 166-residue polypeptide: Deglycase TK1284 (166 aa).

One can recognise a PfpI endopeptidase domain in the interval 1–166 (MKVLILSADG…WMREFVKLLR (166 aa)). Residue His-101 is part of the active site.

Belongs to the peptidase C56 family. Homohexamer formed by a dimer of trimers that assemble into a hollow ring structure.

The protein localises to the cytoplasm. The enzyme catalyses N(omega)-(1-hydroxy-2-oxopropyl)-L-arginyl-[protein] + H2O = lactate + L-arginyl-[protein] + H(+). It catalyses the reaction N(6)-(1-hydroxy-2-oxopropyl)-L-lysyl-[protein] + H2O = lactate + L-lysyl-[protein] + H(+). The catalysed reaction is S-(1-hydroxy-2-oxopropyl)-L-cysteinyl-[protein] + H2O = lactate + L-cysteinyl-[protein] + H(+). It carries out the reaction N(omega)-(1-hydroxy-2-oxoethyl)-L-arginyl-[protein] + H2O = L-arginyl-[protein] + glycolate + H(+). The enzyme catalyses N(6)-(1-hydroxy-2-oxoethyl)-L-lysyl-[protein] + H2O = glycolate + L-lysyl-[protein] + H(+). It catalyses the reaction S-(1-hydroxy-2-oxoethyl)-L-cysteinyl-[protein] + H2O = glycolate + L-cysteinyl-[protein] + H(+). Deglycase that catalyzes the deglycation of the Maillard adducts formed between amino groups of proteins and reactive carbonyl groups of glyoxals. Thus, functions as a protein deglycase that repairs methylglyoxal- and glyoxal-glycated proteins, and releases repaired proteins and lactate or glycolate, respectively. Deglycates cysteine, arginine and lysine residues in proteins, and thus reactivates these proteins by reversing glycation by glyoxals. Acts on early glycation intermediates (hemithioacetals and aminocarbinols), preventing the formation of advanced glycation endproducts (AGE) that cause irreversible damage. Also displays proteolytic activity. The polypeptide is Deglycase TK1284 (Thermococcus kodakarensis (strain ATCC BAA-918 / JCM 12380 / KOD1) (Pyrococcus kodakaraensis (strain KOD1))).